The sequence spans 326 residues: Vitamin B12 import system permease protein BtuC (326 aa).

Transmembrane regions (helical) follow at residues 15 to 35 (WLLS…CAGE), 61 to 81 (LAVL…QALF), 88 to 108 (PGLL…VLLG), 112 to 132 (LPGW…TLIL), 146 to 166 (LLAG…AIYF), 184 to 204 (GGVD…LIWI), 240 to 260 (GWMV…GLVI), 274 to 294 (VLLP…DVVA), and 302 to 322 (ELPI…WLLL).

Belongs to the binding-protein-dependent transport system permease family. FecCD subfamily. In terms of assembly, the complex is composed of two ATP-binding proteins (BtuD), two transmembrane proteins (BtuC) and a solute-binding protein (BtuF).

It localises to the cell inner membrane. Its function is as follows. Part of the ABC transporter complex BtuCDF involved in vitamin B12 import. Involved in the translocation of the substrate across the membrane. This chain is Vitamin B12 import system permease protein BtuC, found in Salmonella enteritidis PT4 (strain P125109).